A 446-amino-acid chain; its full sequence is Citrate/sodium symporter (446 aa).

Helical transmembrane passes span I23–F43, A46–G66, I79–F99, V110–L130, and I148–I168. I181 and G183 together coordinate Na(+). Residues N186 and G187 each contribute to the citrate site. Helical transmembrane passes span I213–I233, E267–K287, I289–A309, Q335–I355, and V364–I384. Residues M399 and N401 each contribute to the Na(+) site. Residues R402, G404, S405, and R428 each contribute to the citrate site. Residues I425–M445 traverse the membrane as a helical segment.

Belongs to the 2-hydroxycarboxylate transporter (2-HCT) (TC 2.A.24) family. In terms of assembly, homodimer.

The protein localises to the cell inner membrane. The catalysed reaction is citrate(out) + 2 Na(+)(out) = citrate(in) + 2 Na(+)(in). Functionally, secondary active transporter that catalyzes the uptake of citrate across the membrane with the concomitant uptake of sodium. Is specific for citrate. The protein is Citrate/sodium symporter of Salmonella pullorum.